Reading from the N-terminus, the 567-residue chain is Malate synthase, glyoxysomal (567 aa).

Arg182 functions as the Proton acceptor in the catalytic mechanism. Asp468 functions as the Proton donor in the catalytic mechanism. A Microbody targeting signal motif is present at residues 565-567 (SKL).

It belongs to the malate synthase family.

Its subcellular location is the glyoxysome. It carries out the reaction glyoxylate + acetyl-CoA + H2O = (S)-malate + CoA + H(+). It functions in the pathway carbohydrate metabolism; glyoxylate cycle; (S)-malate from isocitrate: step 2/2. The sequence is that of Malate synthase, glyoxysomal from Gossypium hirsutum (Upland cotton).